We begin with the raw amino-acid sequence, 1164 residues long: MKKNTDSEMDQRLGYKFLVPDPKAGVFYRPLHFQYVSYSNFILHRLHEILTVKRPLLSFKNNTERIMIEISNVKVTPPDYSPIIASIKGKSYDALATFTVNIFKEVMTKEGISITKISSYEGKDSHLIKIPLLIGYGNKNPLDTAKYLVPNVIGGVFINKQSVEKVGINLVEKITTWPKFRVVKPNSFTFSFSSVSPPNVLPTRYRHYKISLDISQLEASNISSTKTFITVNIVLLSQYLSRVSLEFIRRSLSYDMPPEVVYLVNAIIDSAKRITESITDFNIDTYINDLVEAEHIKQKSQLTINEFKYEMLHNFLPHMNYTPDQLKGFYMISLLRKFLYCIYHTSRYPDRDSMVCHRILTYGKYFETLAHDELENYIGNIRNDIMNNHKNRGTYAVNIHVLTTPGLNHAFSSLLSGKFKKSDGSYRTHPHYSWMQNISIPRSVGFYPDQVKISKMFSVRKYHPSQYLYFCSSDVPERGPQVGLVSQLSVLSSITNILTSEYLDLEKKICEYIRSYYKDDISYFETGFPITIENALVASLNPNMICDFVTDFRRRKRMGFFGNLEVGITLVRDHMNEIRINIGAGRLVRPFLVVDNGELMMDVCPELESRLDDMTFSDIQKEFPHVIEMVDIEQFTFSNVCESVQKFRMMSKDERKQYDLCDFPAEFRDGYVASSLVGINHNSGPRAILGCAQAKQAISCLSSDIRNKIDNGIHLMYPERPIVISKALETSKIAANCFGQHVTIALMSYKGINQEDGIIIKKQFIQRGGLDIVTAKKHQVEIPLENFNNKERDRSNAYSKLESNGLVRLNAFLESGDAIARNISSRTLEDDFARDNQISFDVSEKYTDMYKSRVERVQVELTDKVKVRVLTMKERRPILGDKFTTRTSQKGTVAYIADETELPYDENGITPDVIINSTSIFSRKTISMLIEVILTAAYSAKPYNNKGENRPVCFPSSNETSIDTYMQFAKQCYEHSNPKLSDEELSDKIFCEKILYDPETDKPYASKVFFGPIYYLRLRHLTQDKATVRCRGKKTKLIRQANEGRKRGGGIKFGEMERDCLIAHGAANTITEVLKDSEEDYQDVYVCENCGDIAAQIKGINTCLRCSKLNLSPLLTKIDTTHVSKVFLTQMNARGVKVKLDFERRPPSFYKPLDKVDLKPSFLV.

This sequence belongs to the RNA polymerase beta chain family. As to quaternary structure, the DNA-dependent RNA polymerase used for intermediate and late genes expression consists of eight subunits (147) kDa, (133) kDa, (35) kDa, (30) kDa, (22) kDa, (19) kDa, (18) kDa and (7) kDa totalling more than 500 kDa in mass. The same holoenzyme, with the addition of the transcription-specificity factor RAP94, is used for early gene expression.

The protein resides in the virion. The catalysed reaction is RNA(n) + a ribonucleoside 5'-triphosphate = RNA(n+1) + diphosphate. Its function is as follows. Part of the DNA-dependent RNA polymerase which catalyzes the transcription of viral DNA into RNA using the four ribonucleoside triphosphates as substrates. Responsible for the transcription of early, intermediate and late genes. DNA-dependent RNA polymerase associates with the early transcription factor (ETF), itself composed of D6 and A7, thereby allowing the early genes transcription. Late transcription, and probably also intermediate transcription, require newly synthesized RNA polymerase. The sequence is that of DNA-directed RNA polymerase 132 kDa polypeptide (RPO132) from Oryctolagus cuniculus (Rabbit).